A 130-amino-acid chain; its full sequence is Small ribosomal subunit protein uS11c (130 aa).

This sequence belongs to the universal ribosomal protein uS11 family. Part of the 30S ribosomal subunit.

The protein localises to the plastid. It localises to the chloroplast. The sequence is that of Small ribosomal subunit protein uS11c from Bigelowiella natans (Pedinomonas minutissima).